The primary structure comprises 800 residues: DNA topoisomerase 4 subunit A (800 aa).

The region spanning 31 to 495 (LPDVRDGLKP…EIEEIKIDKE (465 aa)) is the Topo IIA-type catalytic domain. Tyr119 serves as the catalytic O-(5'-phospho-DNA)-tyrosine intermediate.

The protein belongs to the type II topoisomerase GyrA/ParC subunit family. ParC type 2 subfamily. As to quaternary structure, heterotetramer composed of ParC and ParE.

The protein resides in the cell membrane. The enzyme catalyses ATP-dependent breakage, passage and rejoining of double-stranded DNA.. Functionally, topoisomerase IV is essential for chromosome segregation. It relaxes supercoiled DNA. Performs the decatenation events required during the replication of a circular DNA molecule. This Staphylococcus aureus (strain Mu50 / ATCC 700699) protein is DNA topoisomerase 4 subunit A.